A 267-amino-acid polypeptide reads, in one-letter code: 5'-nucleotidase SurE (267 aa).

Positions 9, 10, 40, and 97 each coordinate a divalent metal cation.

It belongs to the SurE nucleotidase family. It depends on a divalent metal cation as a cofactor.

The protein resides in the cytoplasm. It carries out the reaction a ribonucleoside 5'-phosphate + H2O = a ribonucleoside + phosphate. Nucleotidase that shows phosphatase activity on nucleoside 5'-monophosphates. The chain is 5'-nucleotidase SurE from Helicobacter pylori (strain P12).